A 162-amino-acid polypeptide reads, in one-letter code: Phosphopantetheine adenylyltransferase (162 aa).

Residue T10 participates in substrate binding. ATP contacts are provided by residues T10–F11 and H18. 3 residues coordinate substrate: K42, L74, and R88. Residues G89 to R91, E99, and Y124 to S130 contribute to the ATP site.

Belongs to the bacterial CoaD family. As to quaternary structure, homohexamer. Mg(2+) serves as cofactor.

The protein localises to the cytoplasm. It carries out the reaction (R)-4'-phosphopantetheine + ATP + H(+) = 3'-dephospho-CoA + diphosphate. The protein operates within cofactor biosynthesis; coenzyme A biosynthesis; CoA from (R)-pantothenate: step 4/5. In terms of biological role, reversibly transfers an adenylyl group from ATP to 4'-phosphopantetheine, yielding dephospho-CoA (dPCoA) and pyrophosphate. This chain is Phosphopantetheine adenylyltransferase, found in Methylococcus capsulatus (strain ATCC 33009 / NCIMB 11132 / Bath).